The chain runs to 357 residues: bZIP transcription factor 23 (357 aa).

A disordered region spans residues 166–185; it reads PPVPPAPTPTAAAVPPPPPP. Positions 275–338 constitute a bZIP domain; that stretch reads VERRQRRMIK…KNEVLERMSR (64 aa). The tract at residues 277 to 296 is basic motif; it reads RRQRRMIKNRESAARSRQRK. Residues 303 to 317 are leucine-zipper; that stretch reads LEAEVAKLKELNDEL.

This sequence belongs to the bZIP family. ABI5 subfamily. Highly expressed in leaves.

It is found in the nucleus. Transcriptional activator that mediates abscisic acid (ABA) signaling. Can regulate the expression of a wide spectrum of stress-related genes in response to abiotic stresses through an ABA-dependent regulation pathway. Confers ABA-dependent drought and salinity tolerance. Binds specifically to the ABA-responsive elements (ABRE) in the promoter of target genes to mediate stress-responsive ABA signaling. The chain is bZIP transcription factor 23 from Oryza sativa subsp. japonica (Rice).